The following is a 246-amino-acid chain: PARP-type zinc finger-containing protein C2A9.07c (246 aa).

The PARP-type; degenerate zinc-finger motif lies at 8-99; it reads YRVELAKTGR…EKILRAFEQG (92 aa). Residues 103-126 are compositionally biased toward basic and acidic residues; the sequence is EEDEERCRKMASDASEEKDRKIEE. A disordered region spans residues 103–246; sequence EEDEERCRKM…ESGNEYSDSD (144 aa). At Thr-130 the chain carries Phosphothreonine. Ser-131 carries the post-translational modification Phosphoserine. The segment covering 157–168 has biased composition (basic residues); sequence NKKHKAERKRSP. The span at 175 to 184 shows a compositional bias: acidic residues; the sequence is LEDDEEIEDV. Basic and acidic residues predominate over residues 185 to 196; the sequence is ASDKDEEEKPWS. Acidic residues predominate over residues 197 to 215; sequence GDEEDDDELVVKDSEDETE. Ser-243 and Ser-245 each carry phosphoserine.

The protein localises to the nucleus. It is found in the mitochondrion. This is PARP-type zinc finger-containing protein C2A9.07c from Schizosaccharomyces pombe (strain 972 / ATCC 24843) (Fission yeast).